A 41-amino-acid chain; its full sequence is QSEFCGHDVGECVPPKLVCRPPTHECLHFPCPGYLKCCCYP.

4 cysteine pairs are disulfide-bonded: Cys-5–Cys-37, Cys-12–Cys-31, Cys-19–Cys-38, and Cys-26–Cys-39.

In terms of tissue distribution, expressed in tentacles.

It localises to the nematocyst. Its subcellular location is the secreted. In terms of biological role, peptide with unknown function. Does not exhibit any effect on human ion channel TRPV1 in a Xenopus laevis oocytes assay. The polypeptide is Peptide Hact-SCRiP1 (Heliofungia actiniformis (Mushroom coral)).